The following is a 428-amino-acid chain: Enolase (428 aa).

Q163 serves as a coordination point for (2R)-2-phosphoglycerate. E205 (proton donor) is an active-site residue. Mg(2+) contacts are provided by D242, E285, and D312. (2R)-2-phosphoglycerate-binding residues include K337, R366, S367, and K388. The Proton acceptor role is filled by K337.

Belongs to the enolase family. Mg(2+) is required as a cofactor.

It is found in the cytoplasm. Its subcellular location is the secreted. The protein resides in the cell surface. It carries out the reaction (2R)-2-phosphoglycerate = phosphoenolpyruvate + H2O. It functions in the pathway carbohydrate degradation; glycolysis; pyruvate from D-glyceraldehyde 3-phosphate: step 4/5. Its function is as follows. Catalyzes the reversible conversion of 2-phosphoglycerate (2-PG) into phosphoenolpyruvate (PEP). It is essential for the degradation of carbohydrates via glycolysis. This chain is Enolase, found in Brevibacillus brevis (strain 47 / JCM 6285 / NBRC 100599).